The following is a 332-amino-acid chain: Nicotianamine synthase 1 (332 aa).

The protein belongs to the nicotianamine synthase (NAS)-like family. Expressed in roots.

The enzyme catalyses 3 S-adenosyl-L-methionine = nicotianamine + 3 S-methyl-5'-thioadenosine + 3 H(+). Its function is as follows. Synthesizes nicotianamine, a polyamine that is the first intermediate in the synthesis of the phytosiderophores of the mugineic acid type found in gramineae which serve as a sensor for the physiological iron status within the plant, and/or might be involved in the transport of iron. In Oryza sativa subsp. indica (Rice), this protein is Nicotianamine synthase 1 (NAS1).